A 218-amino-acid polypeptide reads, in one-letter code: Stress response regulator protein 1 (218 aa).

The region spanning 90 to 209 (RFLLVDDNSI…YRVVLDVVDN (120 aa)) is the Response regulatory domain. At Asp-142 the chain carries 4-aspartylphosphate.

Required for stress adaptation, morphogenesis and virulence. This chain is Stress response regulator protein 1 (SRR1), found in Meyerozyma guilliermondii (strain ATCC 6260 / CBS 566 / DSM 6381 / JCM 1539 / NBRC 10279 / NRRL Y-324) (Yeast).